The following is a 934-amino-acid chain: Leucine--tRNA ligase 1 (934 aa).

The 'HIGH' region motif lies at 41–51; that stretch reads PYTNSPMHVGH. A 'KMSKS' region motif is present at residues 616–620; it reads KMSKS. Lys-619 is an ATP binding site.

Belongs to the class-I aminoacyl-tRNA synthetase family.

It is found in the cytoplasm. It carries out the reaction tRNA(Leu) + L-leucine + ATP = L-leucyl-tRNA(Leu) + AMP + diphosphate. In Saccharolobus solfataricus (strain ATCC 35092 / DSM 1617 / JCM 11322 / P2) (Sulfolobus solfataricus), this protein is Leucine--tRNA ligase 1.